Reading from the N-terminus, the 510-residue chain is Maturase K (510 aa).

This sequence belongs to the intron maturase 2 family. MatK subfamily.

Its subcellular location is the plastid. It is found in the chloroplast. Functionally, usually encoded in the trnK tRNA gene intron. Probably assists in splicing its own and other chloroplast group II introns. In Mammillaria haageana (Cactus), this protein is Maturase K.